We begin with the raw amino-acid sequence, 469 residues long: MSFLSVSRLAPKLLNSKNATYFLVAARNASASTTNLKDVLSDLIPKEQSRIKNFKQQYGKTNIGQITVDMVYGGMRGMKGLVYETSVLDPEEGIRFRGYSIPECQKLLPKAPGGEEPLPEGLFWLLVTGQVPTEEQVKWVSKEWAKRAALPSHVVTMLDNFPTNLHPMSQFSAAITALNSESSFARAYSEGVHKTKYWEFVYEDSMDLIAKLPCIAAKIYRNLYREGSSIGAIDSNLDWSHNFTNMLGYSEAQFTELMRLYLTIHSDHEGGNVSAHTSHLVGSALSDPYLSFSAAMNGLAGPLHGLANQEVLVWLTALQKEMGGEVSDERMRDYIWNTLKSGRVVPGYGHAVLRKTDPRYTCQREFALKHLPNDPMFKLVAQLYKIVPNVLLEQGKAKNPWPNVDAHSGVLLQYYGMTEMNYYTVLFGVSRALGVLAQLVWSRALGFPLERPKSMSTDGLMTLVGAKSG.

Residues Met-1–Ser-30 constitute a mitochondrion transit peptide. Catalysis depends on residues His-304 and His-350. An oxaloacetate-binding site is contributed by Arg-359. Residue Asp-405 is part of the active site. The oxaloacetate site is built by Arg-431 and Arg-451.

This sequence belongs to the citrate synthase family. As to quaternary structure, homodimer.

Its subcellular location is the mitochondrion matrix. It catalyses the reaction oxaloacetate + acetyl-CoA + H2O = citrate + CoA + H(+). It participates in carbohydrate metabolism; tricarboxylic acid cycle; isocitrate from oxaloacetate: step 1/2. Key enzyme of the Krebs tricarboxylic acid cycle which catalyzes the synthesis of citrate from acetyl coenzyme A and oxaloacetate. This chain is Citrate synthase, mitochondrial (cs), found in Katsuwonus pelamis (Skipjack tuna).